The following is a 123-amino-acid chain: Ribosome-binding factor A (123 aa).

It belongs to the RbfA family. As to quaternary structure, monomer. Binds 30S ribosomal subunits, but not 50S ribosomal subunits or 70S ribosomes.

It is found in the cytoplasm. One of several proteins that assist in the late maturation steps of the functional core of the 30S ribosomal subunit. Associates with free 30S ribosomal subunits (but not with 30S subunits that are part of 70S ribosomes or polysomes). Required for efficient processing of 16S rRNA. May interact with the 5'-terminal helix region of 16S rRNA. This is Ribosome-binding factor A from Variovorax paradoxus (strain S110).